The following is a 393-amino-acid chain: Putative N(4)-(beta-N-acetylglucosaminyl)-L-asparaginase CG1827 (393 aa).

A signal peptide spans 1 to 23 (MRRHLRASLWILCLATMAFSILA). N49 and N64 each carry an N-linked (GlcNAc...) asparagine glycan. 2 disulfides stabilise this stretch: C97-C102 and C196-C212. T243 acts as the Nucleophile in catalysis. Substrate is bound by residues 271–274 (RVGD) and 294–297 (TGDG). C354 and C381 are oxidised to a cystine.

Belongs to the Ntn-hydrolase family. As to quaternary structure, heterotetramer of two alpha and two beta chains arranged as a dimer of alpha/beta heterodimers. Post-translationally, cleaved into an alpha and beta chain by autocatalysis; this activates the enzyme. The N-terminal residue of the beta subunit is responsible for the nucleophile hydrolase activity.

The catalysed reaction is N(4)-(beta-N-acetyl-D-glucosaminyl)-L-asparagine + H2O = N-acetyl-beta-D-glucosaminylamine + L-aspartate + H(+). Cleaves the GlcNAc-Asn bond which joins oligosaccharides to the peptide of asparagine-linked glycoproteins. This is Putative N(4)-(beta-N-acetylglucosaminyl)-L-asparaginase CG1827 from Drosophila melanogaster (Fruit fly).